Consider the following 610-residue polypeptide: Tyrosine-protein kinase Drl (610 aa).

Positions 1–20 are cleaved as a signal peptide; sequence MAPNLLTIGLLLTLIASGQA. Residues 21–242 lie on the Extracellular side of the membrane; sequence HLNIFLNLHE…RENLVPPASG (222 aa). The 132-residue stretch at 24-155 folds into the WIF domain; the sequence is IFLNLHEVLR…NLIFKRKKIC (132 aa). N-linked (GlcNAc...) asparagine glycosylation is found at asparagine 63, asparagine 99, and asparagine 143. Positions 202-230 are disordered; sequence QAPEKQRPVVTESPVGRGNSGGSKRDFDP. Residues 243–263 traverse the membrane as a helical segment; the sequence is LVTLIVGGILALVLVSTLILI. At 264-610 the chain is on the cytoplasmic side; that stretch reads AYCAKGPSKR…EFHTQITRYV (347 aa). In terms of domain architecture, Protein kinase spans 343–606; that stretch reads VRLSCLVQEG…ICLSEFHTQI (264 aa). Residues 349–357 and lysine 371 each bind ATP; that span reads VQEGNFGRI. Residue aspartate 468 is the Proton acceptor of the active site. Position 498 is a phosphotyrosine; by autocatalysis (tyrosine 498).

Belongs to the protein kinase superfamily. Tyr protein kinase family. As to expression, in the embryonic abdominal hemisegment, expression is restricted to cell body, axon and growth cone of a cluster of 20 ventral nerve cord interneurons. During muscle growth and attachment events in the embryonic abdominal hemisegment, expression is in somatic muscle fibers 21-23 at 10-13 hours and 2 patches of approximately 15 neighboring epidermal cells (dorsal and ventral attachment sites) at 6-13 hours.

The protein localises to the cell membrane. It catalyses the reaction L-tyrosyl-[protein] + ATP = O-phospho-L-tyrosyl-[protein] + ADP + H(+). In terms of biological role, probable coreceptor of Wnt proteins. Involved in neuronal pathway recognition and ventral muscle attachment site selection. Non-vital for development. May be part of a signal transduction cascade involved in learning and possibly memory. The protein is Tyrosine-protein kinase Drl (drl) of Drosophila melanogaster (Fruit fly).